Consider the following 160-residue polypeptide: Protein cornichon homolog 3 (160 aa).

Topologically, residues 1–10 (MAFTFAAFCY) are cytoplasmic. A helical membrane pass occupies residues 11–31 (MLSLVLCAALIFFAIWHIIAF). Residues 32-72 (DELRTDFKSPIDQCNPVHARERLRNIERICFLLRKLVLPEY) are Lumenal-facing. The chain crosses the membrane as a helical span at residues 73-93 (SIHSLFCIMFLCAQEWLTLGL). Residues 94 to 138 (NVPLLFYHFWRYFHCPADSSELAYDPPVVMNADTLSYCQKEAWCK) are Cytoplasmic-facing. A helical membrane pass occupies residues 139–159 (LAFYLLSFFYYLYCMIYTLVS). A topological domain (lumenal) is located at residue Ser160.

The protein belongs to the cornichon family. In terms of assembly, acts as an auxiliary subunit for AMPA-selective glutamate receptors (AMPARs). Found in a complex with GRIA1, GRIA2, GRIA3, GRIA4, CNIH2, CACNG2, CACNG3, CACNG4, CACNG5, CACNG7 and CACNG8. Expression is up-regulated in dorsolateral prefrontal cortex of patients with schizophrenia (postmortem brain study).

It is found in the postsynaptic cell membrane. Functionally, regulates the trafficking and gating properties of AMPA-selective glutamate receptors (AMPARs). Promotes their targeting to the cell membrane and synapses and modulates their gating properties by regulating their rates of activation, deactivation and desensitization. This Homo sapiens (Human) protein is Protein cornichon homolog 3 (CNIH3).